We begin with the raw amino-acid sequence, 425 residues long: Adenylosuccinate synthetase (425 aa).

Residues 12-18 and 40-42 contribute to the GTP site; these read GDEGKAK and GHT. D13 serves as the catalytic Proton acceptor. Mg(2+)-binding residues include D13 and G40. IMP-binding positions include 13–16, 38–41, T130, R144, Q224, T239, and R303; these read DEGK and NAGH. H41 serves as the catalytic Proton donor. 299 to 305 serves as a coordination point for substrate; the sequence is ATTGRPR. GTP is bound by residues R305, 331–333, and 411–413; these read KID and STG.

It belongs to the adenylosuccinate synthetase family. As to quaternary structure, homodimer. Mg(2+) is required as a cofactor.

The protein localises to the cytoplasm. The catalysed reaction is IMP + L-aspartate + GTP = N(6)-(1,2-dicarboxyethyl)-AMP + GDP + phosphate + 2 H(+). It participates in purine metabolism; AMP biosynthesis via de novo pathway; AMP from IMP: step 1/2. Plays an important role in the de novo pathway of purine nucleotide biosynthesis. Catalyzes the first committed step in the biosynthesis of AMP from IMP. The protein is Adenylosuccinate synthetase of Leptospira interrogans serogroup Icterohaemorrhagiae serovar copenhageni (strain Fiocruz L1-130).